The following is a 908-amino-acid chain: Probable serine/threonine-protein kinase DDB_G0278521 (908 aa).

Residues 1–153 (MSNNKIIESL…RGEKLSTLDR (153 aa)) are Extracellular-facing. A helical transmembrane segment spans residues 154-174 (IICFSIIYSQDQILLFLLNFI). Residues 175-908 (LSNINCNNNN…SDQNDSDLYD (734 aa)) lie on the Cytoplasmic side of the membrane. ANK repeat units follow at residues 258 to 289 (LKVY…NVYN), 300 to 326 (TNRS…NIHD), 330 to 361 (KGML…ALDQ), 362 to 391 (SNNT…RLSI), and 395 to 424 (NGRY…KMNS). Residues 461–472 (NSNNLTNSNSSS) are compositionally biased toward low complexity. Residues 461 to 491 (NSNNLTNSNSSSVGGLRISNGGNTQQQSIQI) are disordered. The span at 480–490 (NGGNTQQQSIQ) shows a compositional bias: polar residues. The ANK 6 repeat unit spans residues 495-524 (ENNTPIDLLVLNNHFTIAIELLKYEGYIVG). The region spanning 530 to 817 (FKTARKIGAG…LPIANIPKFL (288 aa)) is the Protein kinase domain. Residues 536–544 (IGAGAFGDV) and Lys-557 each bind ATP. Catalysis depends on Asp-677, which acts as the Proton acceptor.

The protein belongs to the protein kinase superfamily. TKL Ser/Thr protein kinase family.

The protein resides in the membrane. The enzyme catalyses L-seryl-[protein] + ATP = O-phospho-L-seryl-[protein] + ADP + H(+). The catalysed reaction is L-threonyl-[protein] + ATP = O-phospho-L-threonyl-[protein] + ADP + H(+). The chain is Probable serine/threonine-protein kinase DDB_G0278521 from Dictyostelium discoideum (Social amoeba).